The primary structure comprises 229 residues: ATP synthase subunit a (229 aa).

A run of 6 helical transmembrane segments spans residues 25 to 45, 82 to 102, 104 to 124, 142 to 162, 181 to 201, and 202 to 222; these read ADAI…SMLA, FFPL…IGLV, GFFP…IVFV, FLGP…IGHF, LVLM…MMLM, and GVLV…IYIQ.

This sequence belongs to the ATPase A chain family. In terms of assembly, F-type ATPases have 2 components, CF(1) - the catalytic core - and CF(0) - the membrane proton channel. CF(1) has five subunits: alpha(3), beta(3), gamma(1), delta(1), epsilon(1). CF(0) has three main subunits: a(1), b(2) and c(9-12). The alpha and beta chains form an alternating ring which encloses part of the gamma chain. CF(1) is attached to CF(0) by a central stalk formed by the gamma and epsilon chains, while a peripheral stalk is formed by the delta and b chains.

Its subcellular location is the cell inner membrane. In terms of biological role, key component of the proton channel; it plays a direct role in the translocation of protons across the membrane. This is ATP synthase subunit a from Geotalea uraniireducens (strain Rf4) (Geobacter uraniireducens).